We begin with the raw amino-acid sequence, 358 residues long: MEQIQVELGVRSYPIFIGQNLLENSDYFSSYLQGKKILIVTNDTIAPLYLAKVQALLASYQCADPVILPDGEQYKTLSQMDAIFTSLLAQNMGRDSVLIALGGGVIGDMTGFAAACYQRGVDFIQIPTTLLSQVDSSVGGKTAVNHPMGKNMIGAFYQPKMVAIDTACLHTLPAREFAAGMAEVIKYGIIWDGSFFSWLEQNVAALKSLDEAALTYAIAKCCQIKADVVAQDETEQGVRALLNLGHTFGHAIEAEMGYGVWLHGEAVAAGTVLAAQTASKMGLVDQSIVCRIEAIFEAFDLPTEAPEAMDFEQFIKHMRRDKKVLNGKLRLVLPKAIGQAEVYGEVSESLLQEVISRA.

NAD(+)-binding positions include D70–K75, G104–D108, T128–T129, K141, K150, and C168–T171. Residues E183, H246, and H263 each contribute to the Zn(2+) site.

Belongs to the sugar phosphate cyclases superfamily. Dehydroquinate synthase family. The cofactor is Co(2+). Zn(2+) serves as cofactor. It depends on NAD(+) as a cofactor.

The protein localises to the cytoplasm. The enzyme catalyses 7-phospho-2-dehydro-3-deoxy-D-arabino-heptonate = 3-dehydroquinate + phosphate. It participates in metabolic intermediate biosynthesis; chorismate biosynthesis; chorismate from D-erythrose 4-phosphate and phosphoenolpyruvate: step 2/7. Its function is as follows. Catalyzes the conversion of 3-deoxy-D-arabino-heptulosonate 7-phosphate (DAHP) to dehydroquinate (DHQ). The sequence is that of 3-dehydroquinate synthase from Shewanella loihica (strain ATCC BAA-1088 / PV-4).